Consider the following 259-residue polypeptide: Snake venom serine protease homolog rhinocerase 3 (259 aa).

Residues 1 to 17 (VLIRVLANLLLLQLSYA) form the signal peptide. A propeptide spanning residues 18–23 (QESSEL) is cleaved from the precursor. Residues 24-250 (VIGGDECDIN…YTDWIEGIIA (227 aa)) form the Peptidase S1 domain. 6 disulfides stabilise this stretch: Cys-30/Cys-164, Cys-51/Cys-67, Cys-99/Cys-257, Cys-143/Cys-211, Cys-175/Cys-190, and Cys-201/Cys-226. The N-linked (GlcNAc...) asparagine glycan is linked to Asn-80. The N-linked (GlcNAc...) asparagine glycan is linked to Asn-252.

It belongs to the peptidase S1 family. Snake venom subfamily. As to expression, expressed by the venom gland.

It is found in the secreted. In terms of biological role, snake venom serine protease homolog that may act in the hemostasis system of the prey. The chain is Snake venom serine protease homolog rhinocerase 3 from Bitis rhinoceros (West African gaboon viper).